We begin with the raw amino-acid sequence, 98 residues long: uncharacterized protein (98 aa).

One can recognise an HTH cro/C1-type domain in the interval 37–91 (LITSRQQLGISQKQLETLSGVKQPMIARIEKGQTNPQLETLLKLLAPLGKTLSIV). A DNA-binding region (H-T-H motif) is located at residues 48 to 67 (QKQLETLSGVKQPMIARIEK).

This is an uncharacterized protein from Haemophilus influenzae (strain ATCC 51907 / DSM 11121 / KW20 / Rd).